A 150-amino-acid polypeptide reads, in one-letter code: MAKEVAGKLRLQIRGGAANPSPPVGPALGSKGVNIMEFCKQFNAKTQDRIGKLLPVVVTYYVDKSFDFVIKNPPVAVQLLEIVKLKSGSAEPNRKKIAEITWEQVKAIAEYKMADLNCFSVEKAIQMVIGTAKSMGIHVKRDFSEKQLNS.

It belongs to the universal ribosomal protein uL11 family. Part of the ribosomal stalk of the 50S ribosomal subunit. Interacts with L10 and the large rRNA to form the base of the stalk. L10 forms an elongated spine to which L12 dimers bind in a sequential fashion forming a multimeric L10(L12)X complex. Post-translationally, one or more lysine residues are methylated.

Functionally, forms part of the ribosomal stalk which helps the ribosome interact with GTP-bound translation factors. The polypeptide is Large ribosomal subunit protein uL11 (Azobacteroides pseudotrichonymphae genomovar. CFP2).